Reading from the N-terminus, the 419-residue chain is Acyl transferase 9 (419 aa).

Residues H161 and D362 each act as proton acceptor in the active site.

Belongs to the plant acyltransferase family.

Involved in the incorporation of ferulate into the cell wall. May act as arabinoxylan feruloyl transferase. In Oryza sativa subsp. japonica (Rice), this protein is Acyl transferase 9.